Here is a 452-residue protein sequence, read N- to C-terminus: Pup--protein ligase (452 aa).

Mg(2+) is bound at residue E9. R53 serves as a coordination point for ATP. Residue Y55 participates in Mg(2+) binding. D57 functions as the Proton acceptor in the catalytic mechanism. Residue E63 coordinates Mg(2+). 2 residues coordinate ATP: T66 and W419.

Belongs to the Pup ligase/Pup deamidase family. Pup-conjugating enzyme subfamily.

The catalysed reaction is ATP + [prokaryotic ubiquitin-like protein]-L-glutamate + [protein]-L-lysine = ADP + phosphate + N(6)-([prokaryotic ubiquitin-like protein]-gamma-L-glutamyl)-[protein]-L-lysine.. The protein operates within protein degradation; proteasomal Pup-dependent pathway. Its pathway is protein modification; protein pupylation. Functionally, catalyzes the covalent attachment of the prokaryotic ubiquitin-like protein modifier Pup to the proteasomal substrate proteins, thereby targeting them for proteasomal degradation. This tagging system is termed pupylation. The ligation reaction involves the side-chain carboxylate of the C-terminal glutamate of Pup and the side-chain amino group of a substrate lysine. This Parafrankia sp. (strain EAN1pec) protein is Pup--protein ligase.